The following is a 278-amino-acid chain: Large ribosomal subunit protein uL24m (278 aa).

One can recognise a KOW domain in the interval 109-142 (FFPGDLVQVMVGKDKGRQGLVLTTSRDSSDVIVD).

It belongs to the universal ribosomal protein uL24 family.

The protein resides in the mitochondrion. The polypeptide is Large ribosomal subunit protein uL24m (mrpl-24) (Caenorhabditis elegans).